The chain runs to 232 residues: Sensory rhodopsin III (232 aa).

The next 7 membrane-spanning stretches (helical) occupy residues 5–25 (IVWYGAGAGAFFVSAVVFVWF), 39–59 (LPPIHTSVAGAAYVAMALIAG), 73–93 (FADWIVSTPIITYYLARLAGV), 100–120 (LAVAANVVMIGVGYGFVSMSG), 125–145 (IAFAVSTVAFIGLLYLYIKTF), 168–188 (VVTWSLYPVVYFLGPLGTGII), and 194–214 (NFLVAVLDTIAKVGFMSILLV). The residue at position 205 (lysine 205) is an N6-(retinylidene)lysine.

It belongs to the archaeal/bacterial/fungal opsin family. Interacts with HtrM. In terms of processing, the covalent binding of retinal to the apoprotein, bacterioopsin, generates bacteriorhodopsin.

The protein resides in the membrane. Functionally, sensory rhodopsin. Associates with an unusual transducer lacking a methyl-accepting transducer domain found in all other photosensory transducers. The chromophore is all-trans-retinal in the dark. The polypeptide is Sensory rhodopsin III (xop2) (Haloarcula marismortui (strain ATCC 43049 / DSM 3752 / JCM 8966 / VKM B-1809) (Halobacterium marismortui)).